The sequence spans 496 residues: Glycerol kinase (496 aa).

Thr-12 is a binding site for ADP. Thr-12, Thr-13, and Ser-14 together coordinate ATP. Position 12 (Thr-12) interacts with sn-glycerol 3-phosphate. Arg-16 is a binding site for ADP. 3 residues coordinate sn-glycerol 3-phosphate: Arg-82, Glu-83, and Tyr-134. The glycerol site is built by Arg-82, Glu-83, and Tyr-134. His-230 bears the Phosphohistidine; by HPr mark. Asp-244 lines the sn-glycerol 3-phosphate pocket. Positions 244 and 245 each coordinate glycerol. 2 residues coordinate ADP: Thr-266 and Gly-309. Positions 266, 309, 313, and 410 each coordinate ATP. Gly-410 and Asn-414 together coordinate ADP.

Belongs to the FGGY kinase family. Homotetramer and homodimer (in equilibrium). In terms of processing, the phosphoenolpyruvate-dependent sugar phosphotransferase system (PTS), including enzyme I, and histidine-containing protein (HPr) are required for the phosphorylation, which leads to the activation of the enzyme.

The catalysed reaction is glycerol + ATP = sn-glycerol 3-phosphate + ADP + H(+). It participates in polyol metabolism; glycerol degradation via glycerol kinase pathway; sn-glycerol 3-phosphate from glycerol: step 1/1. With respect to regulation, activated by phosphorylation and inhibited by fructose 1,6-bisphosphate (FBP). Key enzyme in the regulation of glycerol uptake and metabolism. Catalyzes the phosphorylation of glycerol to yield sn-glycerol 3-phosphate. The sequence is that of Glycerol kinase from Bacillus cereus (strain ATCC 14579 / DSM 31 / CCUG 7414 / JCM 2152 / NBRC 15305 / NCIMB 9373 / NCTC 2599 / NRRL B-3711).